The primary structure comprises 547 residues: Methyl-accepting chemotaxis citrate transducer (547 aa).

Residues 1–5 (MKNIK) lie on the Cytoplasmic side of the membrane. The helical transmembrane segment at 6–29 (VITGVIATLGIFSALLLVTGILFY) threads the bilayer. The Periplasmic portion of the chain corresponds to 30 to 189 (SAVSSDRLNF…ASDQNQSSFT (160 aa)). Residues 190–213 (QMQWTLGIILLIVLIVLAFIWLGL) traverse the membrane as a helical segment. The Cytoplasmic segment spans residues 214 to 547 (QRVLLRPLQR…AAEQANWESF (334 aa)). The 53-residue stretch at 215-267 (RVLLRPLQRIMAHIQTIADGDLTHEIEAEGRSEMGQLAAGLKTMQQSLIRTVS) folds into the HAMP domain. The Methyl-accepting transducer domain maps to 272–501 (NADSIYTGAG…ESAAAAAALE (230 aa)). Gln-296 carries the post-translational modification Glutamate methyl ester (Gln). Glutamate methyl ester (Glu) is present on Glu-303. Gln-310 is subject to Glutamate methyl ester (Gln). The interval 317-336 (QNTDNARQATGLAKTASETA) is disordered. Glutamate methyl ester (Glu) occurs at positions 492 and 501. The disordered stretch occupies residues 518–547 (KQPRREASPTTLSKGLTPQPAAEQANWESF).

This sequence belongs to the methyl-accepting chemotaxis (MCP) protein family. Methylation level is increased by citrate and decreased by phenol.

It localises to the cell inner membrane. Its function is as follows. Acts as a receptor for citrate and mediates taxis away from phenol. Also mediates an attractant response to metal-citrate complexes. In Salmonella typhimurium (strain LT2 / SGSC1412 / ATCC 700720), this protein is Methyl-accepting chemotaxis citrate transducer (tcp).